Here is a 619-residue protein sequence, read N- to C-terminus: Guanylate cyclase soluble subunit beta-1 (619 aa).

His-105 is a heme binding site. The Guanylate cyclase domain occupies 421 to 554 (TILFSGIVGF…NTVNLTSRTE (134 aa)).

Belongs to the adenylyl cyclase class-4/guanylyl cyclase family. In terms of assembly, the active enzyme is formed by a heterodimer of an alpha and a beta subunit. Heterodimer with GUCY1A1. Can also form inactive homodimers in vitro. Heme serves as cofactor. In terms of tissue distribution, detected in brain cortex and cerebellum (at protein level).

The protein localises to the cytoplasm. The enzyme catalyses GTP = 3',5'-cyclic GMP + diphosphate. Activated by nitric oxide in the presence of magnesium or manganese ions. Its function is as follows. Mediates responses to nitric oxide (NO) by catalyzing the biosynthesis of the signaling molecule cGMP. The sequence is that of Guanylate cyclase soluble subunit beta-1 from Homo sapiens (Human).